Consider the following 172-residue polypeptide: 3-hydroxydecanoyl-[acyl-carrier-protein] dehydratase (172 aa).

Histidine 71 is a catalytic residue.

The protein belongs to the thioester dehydratase family. FabA subfamily. As to quaternary structure, homodimer.

It localises to the cytoplasm. It catalyses the reaction a (3R)-hydroxyacyl-[ACP] = a (2E)-enoyl-[ACP] + H2O. The catalysed reaction is (3R)-hydroxydecanoyl-[ACP] = (2E)-decenoyl-[ACP] + H2O. It carries out the reaction (2E)-decenoyl-[ACP] = (3Z)-decenoyl-[ACP]. Its pathway is lipid metabolism; fatty acid biosynthesis. Functionally, necessary for the introduction of cis unsaturation into fatty acids. Catalyzes the dehydration of (3R)-3-hydroxydecanoyl-ACP to E-(2)-decenoyl-ACP and then its isomerization to Z-(3)-decenoyl-ACP. Can catalyze the dehydratase reaction for beta-hydroxyacyl-ACPs with saturated chain lengths up to 16:0, being most active on intermediate chain length. The polypeptide is 3-hydroxydecanoyl-[acyl-carrier-protein] dehydratase (Escherichia coli (strain SE11)).